The primary structure comprises 306 residues: MSISAAQVKELRDLTGAGMMDCKAALNETNGNMEEAVDWLRKKGISKADKKAGRTAAEGLIGVDAGVREAAVVEVNSETDFVARNAAFQEIVANVAKVALAYGTTEAVAAAKYPGSDKSVTDTIKDAVGTIGENLGFRRSAKLTVPHGAVATYVHNAVADGLGKLGVLVAIETTGNEHAANAFGRQVAMHVAATNPMALTAEQIDPAAVEREKAIFSDQARQSGKPEAIIEKMVEGRMRKFYEEVVLLKQAFVLNPDITVEKALKDAEKEIGAPAKITAYLRFALGEGIEKEETDFAAEVAAAVKK.

The segment at 79–82 (TDFV) is involved in Mg(2+) ion dislocation from EF-Tu.

It belongs to the EF-Ts family.

The protein resides in the cytoplasm. Functionally, associates with the EF-Tu.GDP complex and induces the exchange of GDP to GTP. It remains bound to the aminoacyl-tRNA.EF-Tu.GTP complex up to the GTP hydrolysis stage on the ribosome. This is Elongation factor Ts from Mesorhizobium japonicum (strain LMG 29417 / CECT 9101 / MAFF 303099) (Mesorhizobium loti (strain MAFF 303099)).